We begin with the raw amino-acid sequence, 1205 residues long: A disintegrin and metalloproteinase with thrombospondin motifs 2 (1205 aa).

Residues 1-28 (MDPPAGAAGRLLCPALLLLLLLPLPADA) form the signal peptide. The propeptide occupies 29–253 (RLAAAAADPP…VNSSRRRMRR (225 aa)). Residues asparagine 104 and asparagine 245 are each glycosylated (N-linked (GlcNAc...) asparagine). Residues 260–464 (YNIEVLLGVD…HSYDCLRDDP (205 aa)) enclose the Peptidase M12B domain. Intrachain disulfides connect cysteine 337-cysteine 386, cysteine 380-cysteine 459, cysteine 419-cysteine 445, cysteine 486-cysteine 511, cysteine 497-cysteine 520, cysteine 506-cysteine 539, cysteine 533-cysteine 544, cysteine 567-cysteine 604, cysteine 571-cysteine 609, and cysteine 582-cysteine 594. Histidine 402 contacts Zn(2+). Glutamate 403 is a catalytic residue. Zn(2+)-binding residues include histidine 406 and histidine 412. The region spanning 474-554 (QLPGLHYSMN…IWLTPDILKR (81 aa)) is the Disintegrin domain. The region spanning 555–610 (DGNWGAWSPFGSCSRTCGTGVKFRTRQCDNPHPANGGRTCSGLAYDFQLCNSQDCP) is the TSP type-1 1 domain. A Cell attachment site motif is present at residues 685–687 (RGD). The segment at 717–845 (KVVKGTFSRS…NVDDNNVLED (129 aa)) is spacer. 3 consecutive TSP type-1 domains span residues 848–906 (VGYE…NPQE), 908–968 (SQPV…NREL), and 969–1023 (CPGR…GPCP). Asparagine 942, asparagine 943, and asparagine 987 each carry an N-linked (GlcNAc...) asparagine glycan. 3 cysteine pairs are disulfide-bonded: cysteine 981/cysteine 1017, cysteine 985/cysteine 1022, and cysteine 996/cysteine 1006. A glycan (N-linked (GlcNAc...) asparagine) is linked at asparagine 1025. The PLAC domain maps to 1053–1091 (SKGRCQGDKSVFCRMEVLSRYCSIPGYNKLCCKSCNPHD). Asparagine 1092, asparagine 1139, and asparagine 1144 each carry an N-linked (GlcNAc...) asparagine glycan. Residues 1163-1184 (GLEDEVQPPNLIPRRPSPYEKT) form a disordered region.

As to quaternary structure, may belong to a multimeric complex. Binds specifically to collagen type XIV. Zn(2+) is required as a cofactor. In terms of processing, the N-terminus is blocked. Post-translationally, the precursor is cleaved by a furin endopeptidase. Glycosylated. Can be O-fucosylated by POFUT2 on a serine or a threonine residue found within the consensus sequence C1-X(2)-(S/T)-C2-G of the TSP type-1 repeat domains where C1 and C2 are the first and second cysteine residue of the repeat, respectively. Fucosylated repeats can then be further glycosylated by the addition of a beta-1,3-glucose residue by the glucosyltransferase, B3GALTL. Fucosylation mediates the efficient secretion of ADAMTS family members. Can also be C-glycosylated with one or two mannose molecules on tryptophan residues within the consensus sequence W-X-X-W of the TPRs, and N-glycosylated. These other glycosylations can also facilitate secretion. In terms of tissue distribution, enzymatic activity is detected at high level in all type I collagen-rich tissues such as skin, bones, tendons and aorta and at low level in brain and thymus. The mRNA levels were disproportionately high in heart, liver, retina and muscle.

The protein localises to the secreted. The protein resides in the extracellular space. Its subcellular location is the extracellular matrix. It catalyses the reaction Cleaves the N-propeptide of collagen chain alpha1(I) at Pro-|-Gln and of alpha1(II) and alpha2(I) at Ala-|-Gln.. Functionally, cleaves the propeptides of type I and II collagen prior to fibril assembly. Does not act on type III collagen. Cleaves lysyl oxidase LOX at a site downstream of its propeptide cleavage site to produce a short LOX form with reduced collagen-binding activity. The polypeptide is A disintegrin and metalloproteinase with thrombospondin motifs 2 (ADAMTS2) (Bos taurus (Bovine)).